Reading from the N-terminus, the 547-residue chain is Chaperonin GroEL (547 aa).

Residues 30–33 (TLGP), Lys51, 87–91 (DGTTT), Gly415, 479–481 (NAA), and Asp495 contribute to the ATP site.

This sequence belongs to the chaperonin (HSP60) family. Forms a cylinder of 14 subunits composed of two heptameric rings stacked back-to-back. Interacts with the co-chaperonin GroES.

Its subcellular location is the cytoplasm. The enzyme catalyses ATP + H2O + a folded polypeptide = ADP + phosphate + an unfolded polypeptide.. Together with its co-chaperonin GroES, plays an essential role in assisting protein folding. The GroEL-GroES system forms a nano-cage that allows encapsulation of the non-native substrate proteins and provides a physical environment optimized to promote and accelerate protein folding. The protein is Chaperonin GroEL of Nitratidesulfovibrio vulgaris (strain ATCC 29579 / DSM 644 / CCUG 34227 / NCIMB 8303 / VKM B-1760 / Hildenborough) (Desulfovibrio vulgaris).